Consider the following 202-residue polypeptide: Holliday junction branch migration complex subunit RuvA (202 aa).

The domain I stretch occupies residues 1 to 64; that stretch reads MISRLRGTVL…EDAFDLFGFL (64 aa). Residues 65 to 143 are domain II; that stretch reads TKGEEEVFLL…TIHLEAVSRG (79 aa). The flexible linker stretch occupies residues 143-147; sequence GTAPA. The domain III stretch occupies residues 148-202; that stretch reads AVSGAHADLVSALLNLGYKQPQAEKAADLASERLGAEATFQALFREALKALRSGG.

This sequence belongs to the RuvA family. Homotetramer. Forms an RuvA(8)-RuvB(12)-Holliday junction (HJ) complex. HJ DNA is sandwiched between 2 RuvA tetramers; dsDNA enters through RuvA and exits via RuvB. An RuvB hexamer assembles on each DNA strand where it exits the tetramer. Each RuvB hexamer is contacted by two RuvA subunits (via domain III) on 2 adjacent RuvB subunits; this complex drives branch migration. In the full resolvosome a probable DNA-RuvA(4)-RuvB(12)-RuvC(2) complex forms which resolves the HJ.

The protein localises to the cytoplasm. Functionally, the RuvA-RuvB-RuvC complex processes Holliday junction (HJ) DNA during genetic recombination and DNA repair, while the RuvA-RuvB complex plays an important role in the rescue of blocked DNA replication forks via replication fork reversal (RFR). RuvA specifically binds to HJ cruciform DNA, conferring on it an open structure. The RuvB hexamer acts as an ATP-dependent pump, pulling dsDNA into and through the RuvAB complex. HJ branch migration allows RuvC to scan DNA until it finds its consensus sequence, where it cleaves and resolves the cruciform DNA. The protein is Holliday junction branch migration complex subunit RuvA of Myxococcus xanthus (strain DK1622).